A 32-amino-acid polypeptide reads, in one-letter code: Cytochrome b6-f complex subunit 7 (32 aa).

The chain crosses the membrane as a helical span at residues 9-29; sequence AILSSVLVLVGLAVGFLLLKV.

This sequence belongs to the PetM family. As to quaternary structure, the 4 large subunits of the cytochrome b6-f complex are cytochrome b6, subunit IV (17 kDa polypeptide, PetD), cytochrome f and the Rieske protein, while the 4 small subunits are PetG, PetL, PetM and PetN. The complex functions as a dimer.

Its subcellular location is the plastid. The protein localises to the chloroplast thylakoid membrane. Functionally, component of the cytochrome b6-f complex, which mediates electron transfer between photosystem II (PSII) and photosystem I (PSI), cyclic electron flow around PSI, and state transitions. The polypeptide is Cytochrome b6-f complex subunit 7 (Porphyra purpurea (Red seaweed)).